The following is a 39-amino-acid chain: Cytochrome b559 subunit beta (39 aa).

Residues 14–30 traverse the membrane as a helical segment; sequence WLAVHGLAVPTVFFLGS. Residue H18 participates in heme binding.

Belongs to the PsbE/PsbF family. Heterodimer of an alpha subunit and a beta subunit. PSII is composed of 1 copy each of membrane proteins PsbA, PsbB, PsbC, PsbD, PsbE, PsbF, PsbH, PsbI, PsbJ, PsbK, PsbL, PsbM, PsbT, PsbX, PsbY, PsbZ, Psb30/Ycf12, at least 3 peripheral proteins of the oxygen-evolving complex and a large number of cofactors. It forms dimeric complexes. Heme b serves as cofactor.

The protein resides in the plastid. It localises to the chloroplast thylakoid membrane. In terms of biological role, this b-type cytochrome is tightly associated with the reaction center of photosystem II (PSII). PSII is a light-driven water:plastoquinone oxidoreductase that uses light energy to abstract electrons from H(2)O, generating O(2) and a proton gradient subsequently used for ATP formation. It consists of a core antenna complex that captures photons, and an electron transfer chain that converts photonic excitation into a charge separation. In Cedrus deodara (Deodar cedar), this protein is Cytochrome b559 subunit beta.